The chain runs to 496 residues: Glutamate--tRNA ligase (496 aa).

A 'HIGH' region motif is present at residues 10-20; sequence PSPTGPLHIGG. The 'KMSKS' region motif lies at 251–255; the sequence is KMSKR. Residue lysine 254 coordinates ATP.

This sequence belongs to the class-I aminoacyl-tRNA synthetase family. Glutamate--tRNA ligase type 1 subfamily. As to quaternary structure, monomer.

The protein localises to the cytoplasm. It catalyses the reaction tRNA(Glu) + L-glutamate + ATP = L-glutamyl-tRNA(Glu) + AMP + diphosphate. Functionally, catalyzes the attachment of glutamate to tRNA(Glu) in a two-step reaction: glutamate is first activated by ATP to form Glu-AMP and then transferred to the acceptor end of tRNA(Glu). The polypeptide is Glutamate--tRNA ligase (Heliobacterium modesticaldum (strain ATCC 51547 / Ice1)).